The following is a 311-amino-acid chain: Protoheme IX farnesyltransferase (311 aa).

A run of 9 helical transmembrane segments spans residues 38–58, 62–82, 113–133, 134–154, 162–182, 188–208, 230–250, 251–271, and 286–306; these read IKVV…APDM, YFVQ…AAVI, LIFS…AANW, LTAQ…TMFL, IVIG…SETG, PWIL…ALAI, FTKT…FLPF, LIHM…IIFI, and ALNL…ALFA.

The protein belongs to the UbiA prenyltransferase family. Protoheme IX farnesyltransferase subfamily.

It is found in the cell inner membrane. It catalyses the reaction heme b + (2E,6E)-farnesyl diphosphate + H2O = Fe(II)-heme o + diphosphate. It functions in the pathway porphyrin-containing compound metabolism; heme O biosynthesis; heme O from protoheme: step 1/1. Its function is as follows. Converts heme B (protoheme IX) to heme O by substitution of the vinyl group on carbon 2 of heme B porphyrin ring with a hydroxyethyl farnesyl side group. The protein is Protoheme IX farnesyltransferase of Psychromonas ingrahamii (strain DSM 17664 / CCUG 51855 / 37).